The chain runs to 132 residues: Small ribosomal subunit protein uS8c (132 aa).

Belongs to the universal ribosomal protein uS8 family. As to quaternary structure, part of the 30S ribosomal subunit.

It is found in the plastid. It localises to the chloroplast. Functionally, one of the primary rRNA binding proteins, it binds directly to 16S rRNA central domain where it helps coordinate assembly of the platform of the 30S subunit. The polypeptide is Small ribosomal subunit protein uS8c (rps8) (Trieres chinensis (Marine centric diatom)).